The primary structure comprises 879 residues: Alanine--tRNA ligase (879 aa).

Zn(2+) is bound by residues His-566, His-570, Cys-668, and His-672.

Belongs to the class-II aminoacyl-tRNA synthetase family. Requires Zn(2+) as cofactor.

Its subcellular location is the cytoplasm. The enzyme catalyses tRNA(Ala) + L-alanine + ATP = L-alanyl-tRNA(Ala) + AMP + diphosphate. In terms of biological role, catalyzes the attachment of alanine to tRNA(Ala) in a two-step reaction: alanine is first activated by ATP to form Ala-AMP and then transferred to the acceptor end of tRNA(Ala). Also edits incorrectly charged Ser-tRNA(Ala) and Gly-tRNA(Ala) via its editing domain. This chain is Alanine--tRNA ligase, found in Clostridium beijerinckii (strain ATCC 51743 / NCIMB 8052) (Clostridium acetobutylicum).